The following is a 257-amino-acid chain: 5'-nucleotidase SurE (257 aa).

Residues aspartate 8, aspartate 9, serine 40, and asparagine 92 each contribute to the a divalent metal cation site.

It belongs to the SurE nucleotidase family. A divalent metal cation is required as a cofactor.

The protein resides in the cytoplasm. The enzyme catalyses a ribonucleoside 5'-phosphate + H2O = a ribonucleoside + phosphate. Functionally, nucleotidase that shows phosphatase activity on nucleoside 5'-monophosphates. The sequence is that of 5'-nucleotidase SurE from Rhizobium rhizogenes (strain K84 / ATCC BAA-868) (Agrobacterium radiobacter).